The chain runs to 403 residues: Non-structural maintenance of chromosomes element 4 homolog A (403 aa).

Basic and acidic residues predominate over residues 1–45; the sequence is MRKTVKRESEATGGKREADDEPEKLRSVKKEKQRKTEADSVRPDE. Disordered regions lie at residues 1-57, 194-226, and 342-403; these read MRKT…QGIS, LKQR…EEKT, and SSCP…LTSS. Over residues 196 to 206 the composition is skewed to basic residues; that stretch reads QRKRAPNRKRT. Low complexity predominate over residues 342–353; that stretch reads SSCPAASAPASA. Residues 354 to 363 show a composition bias toward polar residues; sequence DFTQDTQTTP. Residues 384–393 show a composition bias toward basic and acidic residues; it reads TPDKEGDGTR. A compositionally biased stretch (basic residues) spans 394–403; it reads RRCKRRLTSS.

The protein belongs to the NSE4 family. In terms of assembly, interacts with SMC5, SMC6A or SMC6B. The SMC5-SMC6 complex is composed of the SMC5 and SMC6 heterodimer attached via their hinge domain and from the non-SMC subunit NSE4A or NSE4B. As to expression, expressed in seedlings, rosette leaves and floral buds.

It is found in the nucleus. Functionally, component of the SMC5-SMC6 complex, that promotes sister chromatid alignment after DNA damage and facilitates double-stranded DNA breaks (DSBs) repair via homologous recombination between sister chromatids. This chain is Non-structural maintenance of chromosomes element 4 homolog A (NSE4A), found in Arabidopsis thaliana (Mouse-ear cress).